Reading from the N-terminus, the 653-residue chain is Ran-binding protein 9 (653 aa).

Positions 1-21 (MSGQPPPPPPQQQPPPPPPPA) are enriched in pro residues. The segment at 1-62 (MSGQPPPPPP…SAAAPFPHGD (62 aa)) is disordered. Residues 22–57 (SAAAPATAPPGLAVGPGPAAGVPVPGLAAGSSAAAP) show a composition bias toward low complexity. Positions 72–259 (LQRRLKRLYP…VDANFGQHPF (188 aa)) constitute a B30.2/SPRY domain. Residues 290–322 (WQTMIQKMVSSYLVHHGYCATAEAFARSTDQTV) enclose the LisH domain. The segment at 326 to 332 (LASIKNR) is interaction with CALB1. Positions 328–385 (SIKNRQRIQKLVLAGRMGEAIETTQQLYPSLLERNPNLLFTLKVRQFIEMVNGTDSEV) constitute a CTLH domain. The residue at position 330 (Lys-330) is an N6-acetyllysine. Positions 386-422 (RCLGGRSPKSQDSYPVSPRPFSSPSMSPSHGMSIHSL) are disordered. The segment covering 398–421 (SYPVSPRPFSSPSMSPSHGMSIHS) has biased composition (low complexity). 2 positions are modified to phosphoserine: Ser-402 and Ser-412. Positions 539 to 653 (AAIERMIHFG…AFATVEDYLH (115 aa)) are interaction with FMR1.

It belongs to the RANBP9/10 family. In terms of assembly, part of a complex consisting of RANBP9, MKLN1 and GID8. Identified in the CTLH complex that contains GID4, RANBP9 and/or RANBP10, MKLN1, MAEA, RMND5A (or alternatively its paralog RMND5B), GID8, ARMC8, WDR26 and YPEL5. Within this complex, MAEA, RMND5A (or alternatively its paralog RMND5B), GID8, WDR26, and RANBP9 and/or RANBP10 form the catalytic core, while GID4, MKLN1, ARMC8 and YPEL5 have ancillary roles. Interacts with GTP-bound Ran, AR, CDC2L1/p110C, CALB1, S100A7, USP11, SOS1 or SOS2, GID8, and FMR1. Interacts with the Dyrk kinases HIPK2, DYRK1A, and DYRK1B. Interacts with TP73 isoform Alpha but not with TP53. Interacts with the HGF receptor MET and the integrins ITGB1 and ITGB2, but not with ITGAL. Part of a complex consisting of RANBP9, RAN, DYRK1B and COPS5. Directly interacts with RANBP10. Interacts with YPEL5. Interacts with MKLN1. Interacts with DDX4. Interacts with NGFR. Interacts with Tex19.1 and, probably, Tex19.2. In terms of processing, phosphorylated in response to stress. Ubiquitinated. Polyubiquitination targets the protein for rapid degradation via the ubiquitin system. As to expression, ubiquitously expressed, with highest levels in maturating spermatocytes.

Its subcellular location is the cytoplasm. The protein resides in the cell membrane. It is found in the nucleus. May act as scaffolding protein, and as adapter protein to couple membrane receptors to intracellular signaling pathways. Acts as a mediator of cell spreading and actin cytoskeleton rearrangement. Core component of the CTLH E3 ubiquitin-protein ligase complex that selectively accepts ubiquitin from UBE2H and mediates ubiquitination and subsequent proteasomal degradation of the transcription factor HBP1. May be involved in signaling of ITGB2/LFA-1 and other integrins. Enhances HGF-MET signaling by recruiting Sos and activating the Ras pathway. Enhances dihydrotestosterone-induced transactivation activity of AR, as well as dexamethasone-induced transactivation activity of NR3C1, but not affect estrogen-induced transactivation. Stabilizes TP73 isoform Alpha, probably by inhibiting its ubiquitination, and increases its proapoptotic activity. Inhibits the kinase activity of DYRK1A and DYRK1B. Inhibits FMR1 binding to RNA. The sequence is that of Ran-binding protein 9 from Mus musculus (Mouse).